The sequence spans 307 residues: MPKISVIGAGNVGATLAQRLIEKDFADVVMLDVVEGIPQGKALDISQSASVLGFRHTITGSNDYAQTAGSEIVVITAGIARKPGMTREELLAINQKIMTDVVSNCLKYSPEATLVVVSNPVDTMTYLAWKLSGLPRKRVVGLSGVLDGGRLATFVARELGVNPSAVSPCVMGEHGGSMVVMSRFTLVNGKPLSELVSPEKADELAKRAVNGGAEIVAFLKTGSAFYAPSASVAAMVEAIFLGSGKVMNCAAVLDGEYGLRNIVLGVPVKLGKGGIKEIITLPLDGQENARLQASAEMVKVQIASLSL.

NAD(+)-binding positions include 8-13 (GAGNVG) and D32. Substrate is bound by residues R81 and R87. NAD(+)-binding positions include N94 and 117–119 (VSN). Positions 119 and 150 each coordinate substrate. The active-site Proton acceptor is the H174.

This sequence belongs to the LDH/MDH superfamily. MDH type 3 family.

The enzyme catalyses (S)-malate + NAD(+) = oxaloacetate + NADH + H(+). Functionally, catalyzes the reversible oxidation of malate to oxaloacetate. This chain is Malate dehydrogenase, found in Dehalococcoides mccartyi (strain CBDB1).